Consider the following 213-residue polypeptide: MAAAADERSPEDGEDEEEEEQLVLVELSGIIDSDFLSKCENKCKVLGIDTERPILQVDSCVFAGEYEDTLGTCVIFEENVEHADTEGNNKTVLKYKCHTMKKLSMTRTLLTEKKEGEENIGGVEWLQIKDNDFSYRPNMICNFLHENEDEEVVASAPDKSLELEEEEIQMNDSSNLSCEQEKPMHLEIEDSGPLIDIPSETEGSVFMETQMLP.

Residues 1-11 (MAAAADERSPE) are compositionally biased toward basic and acidic residues. Disordered stretches follow at residues 1–20 (MAAAADERSPEDGEDEEEEE) and 191–213 (SGPLIDIPSETEGSVFMETQMLP). Residue Ala-2 is modified to N-acetylalanine. Phosphoserine is present on Ser-9.

Belongs to the TFIIIC subunit 6 family. In terms of assembly, part of the TFIIIC subcomplex TFIIIC2, consisting of six subunits, GTF3C1, GTF3C2, GTF3C3, GTF3C4, GTF3C5 and GTF3C6. Interacts with GTF3C4 and GTF3C5.

The protein resides in the nucleus. In terms of biological role, involved in RNA polymerase III-mediated transcription. Integral, tightly associated component of the DNA-binding TFIIIC2 subcomplex that directly binds tRNA and virus-associated RNA promoters. The chain is General transcription factor 3C polypeptide 6 (GTF3C6) from Homo sapiens (Human).